We begin with the raw amino-acid sequence, 651 residues long: ATP-binding cassette sub-family G member 5 (651 aa).

The segment at 1-32 (MGDLSSLTPGGSMGLQVNRGSQSSLEGAPATA) is disordered. At 1 to 383 (MGDLSSLTPG…RVTRNLVRNK (383 aa)) the chain is on the cytoplasmic side. The region spanning 52–293 (RPWWDITSCR…FNDCGYPCPE (242 aa)) is the ABC transporter domain. Position 86–93 (86–93 (GSSGSGKT)) interacts with ATP. Residues 384–404 (LAVITRLLQNLIMGLFLLFFV) traverse the membrane as a helical segment. Residues 388 to 645 (TRLLQNLIMG…ILGIVVFKIR (258 aa)) enclose the ABC transmembrane type-2 domain. The Extracellular portion of the chain corresponds to 405 to 421 (LRVRSNVLKGAIQDRVG). The chain crosses the membrane as a helical span at residues 422–442 (LLYQFVGATPYTGMLNAVNLF). The Cytoplasmic portion of the chain corresponds to 443–467 (PVLRAVSDQESQDGLYQKWQMMLAY). Residues 468–489 (ALHVLPFSVVATMIFSSVCYWT) form a helical membrane-spanning segment. Topologically, residues 490–500 (LGLHPEVARFG) are extracellular. A helical membrane pass occupies residues 501–521 (YFSAALLAPHLIGEFLTLVLL). At 522 to 528 (GIVQNPN) the chain is on the cytoplasmic side. The chain crosses the membrane as a helical span at residues 529-549 (IVNSVVALLSIAGVLVGSGFL). At 550 to 623 (RNIQEMPIPF…PGATSRFTMN (74 aa)) the chain is on the extracellular side. N-linked (GlcNAc...) asparagine glycans are attached at residues N584 and N591. Residues 624 to 644 (FLILYSFIPALVILGIVVFKI) traverse the membrane as a helical segment. At 645–651 (RDHLISR) the chain is on the cytoplasmic side.

It belongs to the ABC transporter superfamily. ABCG family. Eye pigment precursor importer (TC 3.A.1.204) subfamily. Heterodimer with ABCG8. It depends on Mg(2+) as a cofactor. In terms of processing, N-glycosylated. In terms of tissue distribution, strongly expressed in the liver, lower levels in the small intestine and colon.

Its subcellular location is the cell membrane. It localises to the apical cell membrane. The catalysed reaction is cholesterol(in) + ATP + H2O = cholesterol(out) + ADP + phosphate + H(+). It carries out the reaction sitosterol(in) + ATP + H2O = sitosterol(out) + ADP + phosphate + H(+). With respect to regulation, the ATPase activity of the heterodimer is stimulated by cholate. Taurocholate, glycocholate, taurochenodeoxycholate, glycochenodeoxycholate and taurodeoxycholate also stimulate ATPase activity, but to a lower degree. Glycodeoxycholate has no significant effect on ATPase activity. ATPase activity is inhibited by vanadate and by berillium fluoride. Functionally, ABCG5 and ABCG8 form an obligate heterodimer that mediates Mg(2+)- and ATP-dependent sterol transport across the cell membrane. Plays an essential role in the selective transport of dietary plant sterols and cholesterol in and out of the enterocytes and in the selective sterol excretion by the liver into bile. Required for normal sterol homeostasis. The heterodimer with ABCG8 has ATPase activity. The protein is ATP-binding cassette sub-family G member 5 of Homo sapiens (Human).